The primary structure comprises 406 residues: Acetylornithine/succinyldiaminopimelate aminotransferase (406 aa).

Pyridoxal 5'-phosphate-binding positions include 108–109 (GT) and Phe141. Arg144 is a binding site for N(2)-acetyl-L-ornithine. Position 226-229 (226-229 (DEVQ)) interacts with pyridoxal 5'-phosphate. An N6-(pyridoxal phosphate)lysine modification is found at Lys255. A N(2)-acetyl-L-ornithine-binding site is contributed by Ser283. Position 284 (Thr284) interacts with pyridoxal 5'-phosphate.

It belongs to the class-III pyridoxal-phosphate-dependent aminotransferase family. ArgD subfamily. Homodimer. Pyridoxal 5'-phosphate serves as cofactor.

It localises to the cytoplasm. The enzyme catalyses N(2)-acetyl-L-ornithine + 2-oxoglutarate = N-acetyl-L-glutamate 5-semialdehyde + L-glutamate. The catalysed reaction is N-succinyl-(2S,6S)-2,6-diaminopimelate + 2-oxoglutarate = (S)-2-succinylamino-6-oxoheptanedioate + L-glutamate. Its pathway is amino-acid biosynthesis; L-arginine biosynthesis; N(2)-acetyl-L-ornithine from L-glutamate: step 4/4. It participates in amino-acid biosynthesis; L-lysine biosynthesis via DAP pathway; LL-2,6-diaminopimelate from (S)-tetrahydrodipicolinate (succinylase route): step 2/3. In terms of biological role, involved in both the arginine and lysine biosynthetic pathways. The polypeptide is Acetylornithine/succinyldiaminopimelate aminotransferase (Escherichia coli (strain K12)).